Here is a 332-residue protein sequence, read N- to C-terminus: Galectin-4 (332 aa).

Galectin domains follow at residues 19 to 150 and 203 to 332; these read YHNP…INFI and FNGR…YVQI. 265–271 is an a beta-D-galactoside binding site; sequence WGSEERK. At Ser267 the chain carries Phosphoserine.

In terms of assembly, monomer.

Its function is as follows. Galectin that binds lactose and a related range of sugars. May be involved in the assembly of adherens junctions. This Bos taurus (Bovine) protein is Galectin-4 (LGALS4).